The chain runs to 391 residues: MRKLFTSESVTEGHPDKICDQISDAILDAILEKDPNGRVACETTVTTGIVNVMGEISTNCYVDIPKIVRKTVREIGYTRAKYGFDCDTCAVVTSIDEQSADIAMGVDEALESKKGEMDKIDAVGAGDQGMMFGYATNETKEFMPMPIALAHRLSRRLAEVRKDGTLDYLRPDGKTQVTIEYEDDKPVRVDAIVISTQHGPEIGHEQIEKDLIEKVVKYVISPELLDENTKYYINPTGRFVVGGPQGDSGLTGRKIIVDTYGGYGRHGGGAFSGKDPTKVDRSAAYAARWVAKNLVAAGIADKLEIQLAYAIGVAKPVSISVDTFGTGKIEESKIVEIVEKVFDLRPGAIIRDLNLKRPIYRQVAAYGHFGRLDVELPWEQLDRVEAIKKYL.

An ATP-binding site is contributed by histidine 14. Aspartate 16 provides a ligand contact to Mg(2+). Residue glutamate 42 participates in K(+) binding. L-methionine-binding residues include glutamate 55 and glutamine 98. The flexible loop stretch occupies residues 98–108; the sequence is QSADIAMGVDE. ATP contacts are provided by residues 172-174, 238-239, aspartate 247, 253-254, alanine 270, and lysine 274; these read DGK, RF, and RK. Aspartate 247 contributes to the L-methionine binding site. Lysine 278 provides a ligand contact to L-methionine.

The protein belongs to the AdoMet synthase family. Homotetramer; dimer of dimers. Requires Mg(2+) as cofactor. K(+) is required as a cofactor.

The protein localises to the cytoplasm. The enzyme catalyses L-methionine + ATP + H2O = S-adenosyl-L-methionine + phosphate + diphosphate. The protein operates within amino-acid biosynthesis; S-adenosyl-L-methionine biosynthesis; S-adenosyl-L-methionine from L-methionine: step 1/1. Catalyzes the formation of S-adenosylmethionine (AdoMet) from methionine and ATP. The overall synthetic reaction is composed of two sequential steps, AdoMet formation and the subsequent tripolyphosphate hydrolysis which occurs prior to release of AdoMet from the enzyme. In Clostridium acetobutylicum (strain ATCC 824 / DSM 792 / JCM 1419 / IAM 19013 / LMG 5710 / NBRC 13948 / NRRL B-527 / VKM B-1787 / 2291 / W), this protein is S-adenosylmethionine synthase.